Reading from the N-terminus, the 213-residue chain is Protein SRN2 (213 aa).

The VPS37 C-terminal domain occupies 128 to 213 (SKYVASWQDY…TWDKQGNLKY (86 aa)).

The protein belongs to the VPS37 family. In terms of assembly, component of the ESCRT-I complex (endosomal sorting complex required for transport I) which consists of STP22, VPS28, SRN2 and MVB12 in a 1:1:1:1 stoichiometry. Interacts with STP22 and MVB12.

The protein localises to the cytoplasm. Its subcellular location is the endosome. The protein resides in the late endosome membrane. In terms of biological role, component of the ESCRT-I complex, a regulator of vesicular trafficking process. Required for normal endocytic and biosynthetic traffic to the yeast vacuole. The sequence is that of Protein SRN2 (SRN2) from Saccharomyces cerevisiae (strain ATCC 204508 / S288c) (Baker's yeast).